The chain runs to 161 residues: Large ribosomal subunit protein bL17 (161 aa).

The segment at 126 to 161 (TAAKKAPKTRRSRKKATASVAEAPTAEAASEEKAAE) is disordered. Residues 130 to 141 (KAPKTRRSRKKA) are compositionally biased toward basic residues. Over residues 142 to 153 (TASVAEAPTAEA) the composition is skewed to low complexity.

The protein belongs to the bacterial ribosomal protein bL17 family. As to quaternary structure, part of the 50S ribosomal subunit. Contacts protein L32.

The polypeptide is Large ribosomal subunit protein bL17 (Parabacteroides distasonis (strain ATCC 8503 / DSM 20701 / CIP 104284 / JCM 5825 / NCTC 11152)).